Here is a 343-residue protein sequence, read N- to C-terminus: Protein RecA (343 aa).

66 to 73 (GPESSGKT) is a binding site for ATP.

This sequence belongs to the RecA family.

Its subcellular location is the cytoplasm. Its function is as follows. Can catalyze the hydrolysis of ATP in the presence of single-stranded DNA, the ATP-dependent uptake of single-stranded DNA by duplex DNA, and the ATP-dependent hybridization of homologous single-stranded DNAs. It interacts with LexA causing its activation and leading to its autocatalytic cleavage. This is Protein RecA from Rickettsia canadensis (strain McKiel).